The following is a 144-amino-acid chain: Large ribosomal subunit protein uL15 (144 aa).

The interval 1-52 (MRLNTLSPAEGAKHSAKRLGRGIGSGLGKTGGRGHKGQKSRTGSGVRRGFEG) is disordered. Over residues 21–31 (RGIGSGLGKTG) the composition is skewed to gly residues.

The protein belongs to the universal ribosomal protein uL15 family. In terms of assembly, part of the 50S ribosomal subunit.

Its function is as follows. Binds to the 23S rRNA. This chain is Large ribosomal subunit protein uL15, found in Haemophilus influenzae (strain 86-028NP).